A 259-amino-acid polypeptide reads, in one-letter code: MSPSSKKFKKQSSSKSVKPPLEDNDPSLPSFTSLPDEIVLDCLQRVPRSYYLNLCRVSKTLRSLVRSPELSRLRTLLPKNSVYVSFSQNIINVPPDTIYRWFTLKKKTMKTAMKTFRYKLVKIPIPFPSHHSMYNSSAVGSEIYFVGGSFEPMSELWILDTRTGMFRQGPSMKVARTDEASVGVINGKIYVIGGCEDKIQVEVYDPKSRSWKTTKDPEEKTQRGLMTRLSAVSLDWKVYTVEVGRIGVYDPREAGVDGF.

A compositionally biased stretch (basic residues) spans 1–12 (MSPSSKKFKKQS). The tract at residues 1 to 29 (MSPSSKKFKKQSSSKSVKPPLEDNDPSLP) is disordered. In terms of domain architecture, F-box spans 28-76 (LPSFTSLPDEIVLDCLQRVPRSYYLNLCRVSKTLRSLVRSPELSRLRTL). One copy of the Kelch repeat lies at 142–186 (EIYFVGGSFEPMSELWILDTRTGMFRQGPSMKVARTDEASVGVIN).

This chain is F-box/kelch-repeat protein At2g22050, found in Arabidopsis thaliana (Mouse-ear cress).